The following is a 657-amino-acid chain: Translation factor GUF1, mitochondrial (657 aa).

Residues 1–21 constitute a mitochondrion transit peptide; that stretch reads MLKTLGLRSLCPSLGGRGFRR. One can recognise a tr-type G domain in the interval 56-240; the sequence is ENYRNFSIVA…TIVDRIPPPT (185 aa). GTP is bound by residues 65–72, 132–136, and 186–189; these read AHVDHGKS, DTPGH, and NKID.

The protein belongs to the TRAFAC class translation factor GTPase superfamily. Classic translation factor GTPase family. LepA subfamily.

It localises to the mitochondrion inner membrane. The catalysed reaction is GTP + H2O = GDP + phosphate + H(+). Promotes mitochondrial protein synthesis. May act as a fidelity factor of the translation reaction, by catalyzing a one-codon backward translocation of tRNAs on improperly translocated ribosomes. Binds to mitochondrial ribosomes in a GTP-dependent manner. The chain is Translation factor GUF1, mitochondrial from Candida glabrata (strain ATCC 2001 / BCRC 20586 / JCM 3761 / NBRC 0622 / NRRL Y-65 / CBS 138) (Yeast).